The sequence spans 66 residues: MNILKFFFVFIVAMSLVSCSTAAPAKIPIKAIKTVGKAVGKGLRAINIASTANDVFNFLKPKKRKH.

An N-terminal signal peptide occupies residues 1–24 (MNILKFFFVFIVAMSLVSCSTAAP).

In terms of tissue distribution, expressed in fat body and to a lesser extent in hemocyte and Malpighian tubules.

It is found in the secreted. Has antibacterial activity against Gram-positive and Gram-negative bacteria. Probably acts by disturbing membrane functions with its amphipathic structure. The protein is Moricin-1 (MOR1) of Bombyx mori (Silk moth).